A 701-amino-acid polypeptide reads, in one-letter code: DNA-directed RNA polymerase subunit beta' (701 aa).

Zn(2+) contacts are provided by cysteine 76, cysteine 78, cysteine 94, and cysteine 97. Residues aspartate 511, aspartate 513, and aspartate 515 each contribute to the Mg(2+) site.

Belongs to the RNA polymerase beta' chain family. RpoC1 subfamily. In plastids the minimal PEP RNA polymerase catalytic core is composed of four subunits: alpha, beta, beta', and beta''. When a (nuclear-encoded) sigma factor is associated with the core the holoenzyme is formed, which can initiate transcription. Mg(2+) is required as a cofactor. It depends on Zn(2+) as a cofactor.

Its subcellular location is the plastid. It localises to the chloroplast. The enzyme catalyses RNA(n) + a ribonucleoside 5'-triphosphate = RNA(n+1) + diphosphate. In terms of biological role, DNA-dependent RNA polymerase catalyzes the transcription of DNA into RNA using the four ribonucleoside triphosphates as substrates. The protein is DNA-directed RNA polymerase subunit beta' of Pelargonium hortorum (Common geranium).